Here is a 73-residue protein sequence, read N- to C-terminus: Large ribosomal subunit protein bL31 (73 aa).

It belongs to the bacterial ribosomal protein bL31 family. Type A subfamily. As to quaternary structure, part of the 50S ribosomal subunit.

Its function is as follows. Binds the 23S rRNA. This Rhizobium etli (strain CIAT 652) protein is Large ribosomal subunit protein bL31.